We begin with the raw amino-acid sequence, 335 residues long: Fructose-1,6-bisphosphatase class 1 (335 aa).

Residues Glu-92, Asp-115, Leu-117, and Asp-118 each contribute to the Mg(2+) site. Substrate-binding positions include 118-121 (DGSS), Asn-211, Tyr-244, 262-264 (YLY), and Lys-274. Glu-280 contributes to the Mg(2+) binding site.

This sequence belongs to the FBPase class 1 family. As to quaternary structure, homotetramer. It depends on Mg(2+) as a cofactor.

It is found in the cytoplasm. The enzyme catalyses beta-D-fructose 1,6-bisphosphate + H2O = beta-D-fructose 6-phosphate + phosphate. It participates in carbohydrate biosynthesis; gluconeogenesis. The polypeptide is Fructose-1,6-bisphosphatase class 1 (Teredinibacter turnerae (strain ATCC 39867 / T7901)).